Consider the following 123-residue polypeptide: MNAVTETVDLQAPPPVPLVFTDSAAAKVKDLLAEEGNPELKLRVFVQGGGCSGFQYGFTFDEVVNDDDTVLDKAGVQLLVDPMSFQYLVGAEIDYKEDLEGAQFVIRNPNASTTCGCGSSFSV.

Positions 51, 115, and 117 each coordinate iron-sulfur cluster.

Belongs to the HesB/IscA family. In terms of assembly, homodimer. Iron-sulfur cluster is required as a cofactor.

In terms of biological role, required for insertion of 4Fe-4S clusters. The protein is Putative iron-sulfur cluster insertion protein ErpA of Bordetella bronchiseptica (strain ATCC BAA-588 / NCTC 13252 / RB50) (Alcaligenes bronchisepticus).